The sequence spans 415 residues: MKGSYKSRWVIVIVVVIAAIAAFWFWQGRNDSRSAAPGATKQAQQSPASGRRGMRSGPLAPVQAATAVEQAVPRYLTGLGTITAANTVTVRSRVDGQLMALHFQEGQQVKAGDLLAEIDPSQFKVALAQAQGQLAKDKATLANARRDLARYQQLAKTNLVSRQELDAQQALVSETEGTIKADEASVASAQLQLDWSRITAPVDGRVGLKQVDVGNQISSGDTTGIVVITQTHPIDLVFTLPESDIATVVQAQKAGKPLVVEAWDRTNSKKLSEGTLLSLDNQIDATTGTIKVKARFNNQDDALFPNQFVNARMLVDTEQNAVVIPTAALQMGNEGHFVWVLNSENKVSKHLVTPGIQDSQKVVIRAGISAGDRVVTDGIDRLTEGAKVEVVEAQSATTPEEKATSREYAKKGARS.

A signal peptide spans 1-21 (MKGSYKSRWVIVIVVVIAAIA). Disordered stretches follow at residues 32-60 (SRSA…GPLA) and 392-415 (EAQS…GARS). Residues 399–415 (PEEKATSREYAKKGARS) show a composition bias toward basic and acidic residues.

Belongs to the membrane fusion protein (MFP) (TC 8.A.1) family. As to quaternary structure, part of a tripartite efflux system composed of MdtA, MdtB and MdtC.

It is found in the cell inner membrane. Its function is as follows. The MdtABC tripartite complex confers resistance against novobiocin and deoxycholate. The sequence is that of Multidrug resistance protein MdtA from Escherichia coli O81 (strain ED1a).